Here is a 316-residue protein sequence, read N- to C-terminus: HPr kinase/phosphorylase (316 aa).

Active-site residues include histidine 143 and lysine 164. 158–165 is a binding site for ATP; sequence GEAGSGKS. Mg(2+) is bound at residue serine 165. Aspartate 182 (proton acceptor; for phosphorylation activity. Proton donor; for dephosphorylation activity) is an active-site residue. Positions 206–215 are important for the catalytic mechanism of both phosphorylation and dephosphorylation; that stretch reads LEVRGLGVLN. Glutamate 207 lines the Mg(2+) pocket. Residue arginine 251 is part of the active site. The segment at 272–277 is important for the catalytic mechanism of dephosphorylation; that stretch reads PVMPGR.

It belongs to the HPrK/P family. As to quaternary structure, homohexamer. Requires Mg(2+) as cofactor.

The enzyme catalyses [HPr protein]-L-serine + ATP = [HPr protein]-O-phospho-L-serine + ADP + H(+). It catalyses the reaction [HPr protein]-O-phospho-L-serine + phosphate + H(+) = [HPr protein]-L-serine + diphosphate. Its function is as follows. Catalyzes the ATP- as well as the pyrophosphate-dependent phosphorylation of a specific serine residue in HPr, a phosphocarrier protein of the phosphoenolpyruvate-dependent sugar phosphotransferase system (PTS). HprK/P also catalyzes the pyrophosphate-producing, inorganic phosphate-dependent dephosphorylation (phosphorolysis) of seryl-phosphorylated HPr (P-Ser-HPr). This Xanthomonas axonopodis pv. citri (strain 306) protein is HPr kinase/phosphorylase.